Here is a 618-residue protein sequence, read N- to C-terminus: Matrix metalloproteinase-24 (618 aa).

The first 41 residues, 1-41 (MPRSRGGRAAPGQAARWSGWRAPGRLLPLLPALCCLAAAAG), serve as a signal peptide directing secretion. Positions 42-128 (AGKPAGADAP…HLSRRRRNKR (87 aa)) are excised as a propeptide. At 42-575 (AGKPAGADAP…IDDVPGSVNA (534 aa)) the chain is on the extracellular side. Residues 110–117 (PRCGVPDH) carry the Cysteine switch motif. Zn(2+) is bound by residues cysteine 112 and histidine 255. Glutamate 256 is an active-site residue. Residues histidine 259 and histidine 265 each contribute to the Zn(2+) site. The segment at 296 to 352 (QKIYGPPAEPLEPTRPLPTLPVRRIHSPSERKHERQPRPPRPPLGDRPSTPGAKPNI) is disordered. Residues 302–314 (PAEPLEPTRPLPT) show a composition bias toward pro residues. Residues 322–332 (SPSERKHERQP) show a composition bias toward basic and acidic residues. Hemopexin repeat units follow at residues 350-398 (PNIC…WKGL), 399-444 (PARI…GSCL), 446-494 (REGI…KGIP), and 495-542 (QAPQ…WMGC). Residues cysteine 353 and cysteine 542 are joined by a disulfide bond. Residues 576–596 (VAVVVPCTLSLCLLVLLYTIF) traverse the membrane as a helical segment. Residues 597 to 618 (QFKNKTGPQPVTYYKRPVQEWV) lie on the Cytoplasmic side of the membrane. The PDZ-binding motif lies at 616–618 (EWV).

Belongs to the peptidase M10A family. In terms of assembly, interacts (via PDZ-binding motif) with APBA3 (via PDZ domain). Interacts with GRIP1 and GRIP2. The cofactor is Zn(2+). Ca(2+) serves as cofactor. Post-translationally, cleaved by a furin endopeptidase in the trans-Golgi network. Predominantly expressed in the nervous system: while enriched in the central nervous system, expression is also detected in the peripheral nervous system, including the trigeminal ganglion. Expression is not restricted to the nervous system: it is also enriched in the thymus, with a lower level of expression present in the aorta. In brain, high expression is present in the brain parenchyma, particularly within the neocortex.

It localises to the cell membrane. Its subcellular location is the golgi apparatus. It is found in the trans-Golgi network membrane. The protein resides in the secreted. The protein localises to the extracellular space. It localises to the extracellular matrix. Metalloprotease that mediates cleavage of N-cadherin (CDH2) and acts as a regulator of neuro-immune interactions and neural stem cell quiescence. Involved in cell-cell interactions between nociceptive neurites and mast cells, possibly by mediating cleavage of CDH2, thereby acting as a mediator of peripheral thermal nociception and inflammatory hyperalgesia. Key regulator of neural stem cells quiescence by mediating cleavage of CDH2, affecting CDH2-mediated anchorage of neural stem cells to ependymocytes in the adult subependymal zone, leading to modulate their quiescence. May play a role in axonal growth. Able to activate progelatinase A. May also be a proteoglycanase involved in degradation of proteoglycans, such as dermatan sulfate and chondroitin sulfate proteoglycans. Cleaves partially fibronectin, but not collagen type I, nor laminin. The chain is Matrix metalloproteinase-24 (Mmp24) from Rattus norvegicus (Rat).